Reading from the N-terminus, the 218-residue chain is Trimethylamine corrinoid protein 2 (218 aa).

Positions 1–92 (MAGKEEIIAK…EMEKRKSQTK (92 aa)) constitute a B12-binding N-terminal domain. The region spanning 94–218 (LGTVIIGTIE…AKVKAALKVG (125 aa)) is the B12-binding domain. His107 contacts methylcob(III)alamin.

Belongs to the methylamine corrinoid protein family. Can form a complex with MttB.

Its pathway is one-carbon metabolism; methanogenesis from trimethylamine. Functionally, acts probably as a methyl group carrier between MttB and either MtbA or MtaA. The sequence is that of Trimethylamine corrinoid protein 2 (mttC2) from Methanosarcina mazei (strain ATCC BAA-159 / DSM 3647 / Goe1 / Go1 / JCM 11833 / OCM 88) (Methanosarcina frisia).